Here is a 362-residue protein sequence, read N- to C-terminus: Transcription factor bHLH128 (362 aa).

The span at Met1–Ser16 shows a compositional bias: low complexity. Disordered stretches follow at residues Met1–Leu23, Ser78–Asp106, Ser120–Ala140, and Leu162–Leu184. Over residues Ser78–Gly96 the composition is skewed to polar residues. Positions Leu162–Gly173 are enriched in polar residues. A Phosphoserine modification is found at Ser189. The bHLH domain occupies Cys289–Leu339.

In terms of assembly, homodimer.

It localises to the nucleus. The chain is Transcription factor bHLH128 (BHLH128) from Arabidopsis thaliana (Mouse-ear cress).